Here is a 445-residue protein sequence, read N- to C-terminus: Pre-B-cell leukemia transcription factor 2 (445 aa).

The interval 13–44 is disordered; it reads VGIPGLPIHGGPQTLTPHPMHEPPTDNGEPRK. Over residues 31 to 44 the composition is skewed to basic and acidic residues; the sequence is PMHEPPTDNGEPRK. Residues 42-236 enclose the PBC domain; sequence PRKQDIGDIL…VMILRSRFLD (195 aa). The interval 49–128 is PBC-A; that stretch reads DILQQIMTIT…EGVAGPEKGG (80 aa). The PBC-B stretch occupies residues 131–236; it reads AAAAAAAAAS…VMILRSRFLD (106 aa). The homeobox; TALE-type DNA-binding region spans 237–299; the sequence is ARRKRRNFSK…NKRIRYKKNI (63 aa). A compositionally biased stretch (polar residues) spans 319-332; that stretch reads QGGHSGANSPTTPT. The interval 319–338 is disordered; the sequence is QGGHSGANSPTTPTSAGSGG.

Belongs to the TALE/PBX homeobox family.

Its subcellular location is the nucleus. Functionally, transcriptional activator that binds the sequence 5'-ATCAATCAA-3'. This is Pre-B-cell leukemia transcription factor 2 (pbx2) from Xenopus laevis (African clawed frog).